The chain runs to 125 residues: Small ribosomal subunit protein uS12 (125 aa).

Residue D89 is modified to 3-methylthioaspartic acid.

It belongs to the universal ribosomal protein uS12 family. Part of the 30S ribosomal subunit. Contacts proteins S8 and S17. May interact with IF1 in the 30S initiation complex.

Its function is as follows. With S4 and S5 plays an important role in translational accuracy. Functionally, interacts with and stabilizes bases of the 16S rRNA that are involved in tRNA selection in the A site and with the mRNA backbone. Located at the interface of the 30S and 50S subunits, it traverses the body of the 30S subunit contacting proteins on the other side and probably holding the rRNA structure together. The combined cluster of proteins S8, S12 and S17 appears to hold together the shoulder and platform of the 30S subunit. This chain is Small ribosomal subunit protein uS12, found in Clostridium botulinum (strain ATCC 19397 / Type A).